Here is a 165-residue protein sequence, read N- to C-terminus: MKSIYITGYMGAGKTTIGKALSQELQMDVVDTDQKIEEKQKKAIRDIFAEEGEMTFREYESEMLRSLPVHNVIITTGGGIIERAENRKWMKENGTVVYLYCDPNVIAERLREDTTRPLFQKKDIDAFVKKFESRRAYYEEAHIHIDTTNKSVKQIMNELKEKINV.

11 to 16 contributes to the ATP binding site; it reads GAGKTT. Mg(2+) is bound at residue Thr15. Substrate is bound by residues Asp33, Arg57, and Gly78. Arg116 contributes to the ATP binding site. Arg134 contributes to the substrate binding site.

It belongs to the shikimate kinase family. Monomer. Requires Mg(2+) as cofactor.

It localises to the cytoplasm. It carries out the reaction shikimate + ATP = 3-phosphoshikimate + ADP + H(+). It participates in metabolic intermediate biosynthesis; chorismate biosynthesis; chorismate from D-erythrose 4-phosphate and phosphoenolpyruvate: step 5/7. In terms of biological role, catalyzes the specific phosphorylation of the 3-hydroxyl group of shikimic acid using ATP as a cosubstrate. The protein is Shikimate kinase of Bacillus cereus (strain G9842).